The following is a 198-amino-acid chain: ATP-dependent Clp protease proteolytic subunit (198 aa).

Residue Ser102 is the Nucleophile of the active site. The active site involves His127.

Belongs to the peptidase S14 family. In terms of assembly, fourteen ClpP subunits assemble into 2 heptameric rings which stack back to back to give a disk-like structure with a central cavity, resembling the structure of eukaryotic proteasomes.

The protein localises to the cytoplasm. It carries out the reaction Hydrolysis of proteins to small peptides in the presence of ATP and magnesium. alpha-casein is the usual test substrate. In the absence of ATP, only oligopeptides shorter than five residues are hydrolyzed (such as succinyl-Leu-Tyr-|-NHMec, and Leu-Tyr-Leu-|-Tyr-Trp, in which cleavage of the -Tyr-|-Leu- and -Tyr-|-Trp bonds also occurs).. Its function is as follows. Cleaves peptides in various proteins in a process that requires ATP hydrolysis. Has a chymotrypsin-like activity. Plays a major role in the degradation of misfolded proteins. The protein is ATP-dependent Clp protease proteolytic subunit of Brachyspira hyodysenteriae (strain ATCC 49526 / WA1).